The following is a 646-amino-acid chain: Pentatricopeptide repeat-containing protein At5g48910 (646 aa).

The segment at 1–24 (MNPTQTLFSPGGNSPASSPASHPS) is disordered. Residues 9 to 24 (SPGGNSPASSPASHPS) show a composition bias toward low complexity. PPR repeat units follow at residues 54–88 (DTLA…MPQR), 89–126 (NCFS…FVEP), 127–161 (NRFT…GFGG), 162–197 (DEFV…DMVV), 207–237 (EIVL…MRQR), 238–272 (SVVS…DIRP), 273–307 (NYVT…GIRI), 308–338 (DDVL…LPRE), 339–373 (NVIT…GVRP), 374–409 (SDVA…GLEP), and 410–440 (RIEH…MPIK). A type E motif region spans residues 445–520 (IWKALLGACR…DPGCSLIDID (76 aa)). A type E(+) motif region spans residues 521–551 (GVLHEFVVEDDSHPKAKEINSMLVEISDKLR). The type DYW motif stretch occupies residues 552–646 (LAGYRPITTQ…DGSCSCMDYW (95 aa)).

Belongs to the PPR family. PCMP-H subfamily.

This is Pentatricopeptide repeat-containing protein At5g48910 (PCMP-H38) from Arabidopsis thaliana (Mouse-ear cress).